We begin with the raw amino-acid sequence, 148 residues long: Calmodulin-related protein 97A (148 aa).

4 EF-hand domains span residues 7–42, 43–78, 80–115, and 116–148; these read EQIAEFKDAFVQFDKEGTGKIATRELGTLMRTLGQN, PTEAELQDLIAEAENNNNGQLNFTEFCGIMAKQMRE, DTEEEMREAFKIFDRDGDGFISPAELRFVMINLGEK, and VTDEEIDEMIREADFDGDGMINYEEFVWMISQK. 17 residues coordinate Ca(2+): Asp-20, Thr-24, Lys-26, Glu-31, Asn-58, Asn-60, Gln-62, Glu-67, Asp-93, Asp-95, Asp-97, Glu-104, Asp-129, Asp-131, Asp-133, Met-135, and Glu-140.

The protein belongs to the calmodulin family.

May be involved in calcium-mediated signal transduction. This is Calmodulin-related protein 97A (Acam) from Drosophila melanogaster (Fruit fly).